The sequence spans 358 residues: Phospho-N-acetylmuramoyl-pentapeptide-transferase (358 aa).

The next 10 membrane-spanning stretches (helical) occupy residues 19-39 (YLTL…VLIG), 71-91 (TMGG…WADL), 95-115 (YVWV…IDDY), 126-146 (LIAR…ALYL), 166-186 (VMPQ…VGTS), 194-214 (GLDG…AIFA), 237-257 (LVIV…FNTY), 261-281 (VFMG…IAVL), 286-306 (IVLV…ILQV), and 336-356 (VIVR…ATLK).

This sequence belongs to the glycosyltransferase 4 family. MraY subfamily. Mg(2+) serves as cofactor.

Its subcellular location is the cell inner membrane. It carries out the reaction UDP-N-acetyl-alpha-D-muramoyl-L-alanyl-gamma-D-glutamyl-meso-2,6-diaminopimeloyl-D-alanyl-D-alanine + di-trans,octa-cis-undecaprenyl phosphate = di-trans,octa-cis-undecaprenyl diphospho-N-acetyl-alpha-D-muramoyl-L-alanyl-D-glutamyl-meso-2,6-diaminopimeloyl-D-alanyl-D-alanine + UMP. It functions in the pathway cell wall biogenesis; peptidoglycan biosynthesis. In terms of biological role, catalyzes the initial step of the lipid cycle reactions in the biosynthesis of the cell wall peptidoglycan: transfers peptidoglycan precursor phospho-MurNAc-pentapeptide from UDP-MurNAc-pentapeptide onto the lipid carrier undecaprenyl phosphate, yielding undecaprenyl-pyrophosphoryl-MurNAc-pentapeptide, known as lipid I. The polypeptide is Phospho-N-acetylmuramoyl-pentapeptide-transferase (Pseudoalteromonas atlantica (strain T6c / ATCC BAA-1087)).